The sequence spans 149 residues: UPF0179 protein MA_3685 (149 aa).

The protein belongs to the UPF0179 family.

The chain is UPF0179 protein MA_3685 from Methanosarcina acetivorans (strain ATCC 35395 / DSM 2834 / JCM 12185 / C2A).